The chain runs to 705 residues: Crooked neck-like protein 1 (705 aa).

14 HAT repeats span residues 55–87 (DYRLRKRQQYESLLGRNRKTAAIYIKYAAWEES), 89–121 (KDLTRARSVFERFLDIDHRIPTVWIKYAEMEMK), 123–155 (KNINLARNIWDRAVCLLPRVSQLWFKYTFMEDM), 157–188 (GNYPAARAIFERWMQWKPEPQAWNSYLKFEQR), 190–221 (KLFENTRLIFEKYILVHPYIKTWIKYTKFEER), 223–258 (GNIENARTIFQRAIEFLGEDGNDEQLFIAFAKFEEK), 260–294 (KEIERARVIYKYAIDHVPKSRAKDLFDTFTNFEKQ), 304–336 (VVLGKKRFQYEEEIKKNSKNYDIWFDYLKMEEI), 338–372 (GEIEKTREIYERSIGNLPPTNEKKHWKRYIYLWIN), 382–418 (KDMERARSVYSECIKLIPHKEFSFSKIWILYANFEIR), 420–451 (LNLDKARLIYGQAIGRNPKSKIFDQYIHLEIE), 453–485 (GNFDRVRTLYEKYLEIMPDNCDAWCKFAQLETE), 487–521 (GETVRARAIFELAIQQPNLDRPEVVWKDFIDSEIQ), and 523–554 (KQFDFVKQLYRKLLEKTNHVKVWIGFIKFVHS). The disordered stretch occupies residues 559-591 (QQQKQRQQQQEEDGDSNTTKKDGGDDDNNDDIN). The HAT 15 repeat unit spans residues 597 to 629 (IFIEAHKSLSNSDKEERLLLLESWKEFEQTFGN).

This sequence belongs to the crooked-neck family. In terms of assembly, identified in the spliceosome C complex.

The protein resides in the nucleus. It is found in the nucleus speckle. Involved in pre-mRNA splicing process. In Dictyostelium discoideum (Social amoeba), this protein is Crooked neck-like protein 1 (crnkl1).